The chain runs to 562 residues: Formate--tetrahydrofolate ligase (562 aa).

An ATP-binding site is contributed by 71-78; the sequence is TPAGEGKS.

The protein belongs to the formate--tetrahydrofolate ligase family.

It catalyses the reaction (6S)-5,6,7,8-tetrahydrofolate + formate + ATP = (6R)-10-formyltetrahydrofolate + ADP + phosphate. Its pathway is one-carbon metabolism; tetrahydrofolate interconversion. In Bacillus thuringiensis (strain Al Hakam), this protein is Formate--tetrahydrofolate ligase.